The following is a 132-amino-acid chain: uncharacterized protein (132 aa).

3 helical membrane-spanning segments follow: residues 28–48, 59–79, and 106–126; these read LLRL…LIYP, ILPS…LFSY, and LLVA…VIEI.

The protein resides in the membrane. This is an uncharacterized protein from Schizosaccharomyces pombe (strain 972 / ATCC 24843) (Fission yeast).